We begin with the raw amino-acid sequence, 961 residues long: Vitamin B12-dependent ribonucleotide reductase (961 aa).

Residues 1 to 23 (MTETTSGPARGSRTKGTKATKGL) are disordered. Substrate is bound by residues Ser143, 159 to 160 (AC), Gly188, 364 to 368 (NPCSE), and 554 to 558 (PTGTI). A disulfide bridge connects residues Cys160 and Cys377. Asn364 (proton acceptor) is an active-site residue. Cys366 serves as the catalytic Cysteine radical intermediate. Glu368 functions as the Proton acceptor in the catalytic mechanism.

The protein belongs to the ribonucleoside diphosphate reductase class-2 family. As to quaternary structure, homotetramer. It depends on adenosylcob(III)alamin as a cofactor.

It catalyses the reaction a 2'-deoxyribonucleoside 5'-diphosphate + [thioredoxin]-disulfide + H2O = a ribonucleoside 5'-diphosphate + [thioredoxin]-dithiol. Its function is as follows. Catalyzes the reduction of ribonucleotides to deoxyribonucleotides. May function to provide a pool of deoxyribonucleotide precursors for DNA repair during oxygen limitation and/or for immediate growth after restoration of oxygen. The polypeptide is Vitamin B12-dependent ribonucleotide reductase (nrdJ) (Streptomyces clavuligerus).